The primary structure comprises 371 residues: Protein OSB2, chloroplastic (371 aa).

The transit peptide at 1-20 (MSLISKSLARIECSPFFYPR) directs the protein to the chloroplast. The segment at 45-64 (GKTGNGERKQRAKAPAKTPE) is disordered. An SSB domain is found at 97–195 (VANWVNLIGF…VLVQNLNFIQ (99 aa)). PDF region regions lie at residues 237–289 (WNHL…PKLE) and 312–360 (WKDL…PKLP).

As to expression, expressed in the floral abscission zone.

The protein resides in the plastid. The protein localises to the chloroplast. In terms of biological role, binds preferentially single-stranded DNA. Does not bind to RNA. In Arabidopsis thaliana (Mouse-ear cress), this protein is Protein OSB2, chloroplastic (OSB2).